The sequence spans 287 residues: uncharacterized protein (287 aa).

The next 10 membrane-spanning stretches (helical) occupy residues 7–28 (LLLT…RAAL), 32–54 (AIDA…AVLL), 67–86 (GWRG…YAYV), 91–113 (GTGA…LLRG), 120–139 (ALLG…LPGA), 144–163 (LGGA…YTLL), 170–192 (PLAV…LLAF), 202–224 (GLAY…WYSA), 231–253 (IQGA…LLLG), and 263–280 (ATLA…PRLG). 2 EamA domains span residues 15 to 136 (LAFA…FLLL) and 155 to 276 (LAWG…LILA).

The protein localises to the cell membrane. This is an uncharacterized protein from Pseudomonas aeruginosa (strain ATCC 15692 / DSM 22644 / CIP 104116 / JCM 14847 / LMG 12228 / 1C / PRS 101 / PAO1).